Reading from the N-terminus, the 322-residue chain is Beta-ketoacyl-[acyl-carrier-protein] synthase III (322 aa).

Active-site residues include Cys-113 and His-249. Positions 250-254 (QANLR) are ACP-binding. Asn-279 is a catalytic residue.

This sequence belongs to the thiolase-like superfamily. FabH family. As to quaternary structure, homodimer.

Its subcellular location is the cytoplasm. It carries out the reaction malonyl-[ACP] + acetyl-CoA + H(+) = 3-oxobutanoyl-[ACP] + CO2 + CoA. It functions in the pathway lipid metabolism; fatty acid biosynthesis. Functionally, catalyzes the condensation reaction of fatty acid synthesis by the addition to an acyl acceptor of two carbons from malonyl-ACP. Catalyzes the first condensation reaction which initiates fatty acid synthesis and may therefore play a role in governing the total rate of fatty acid production. Possesses both acetoacetyl-ACP synthase and acetyl transacylase activities. Its substrate specificity determines the biosynthesis of branched-chain and/or straight-chain of fatty acids. In Granulibacter bethesdensis (strain ATCC BAA-1260 / CGDNIH1), this protein is Beta-ketoacyl-[acyl-carrier-protein] synthase III.